Here is a 284-residue protein sequence, read N- to C-terminus: Tegument protein UL23 (284 aa).

It belongs to the herpesviridae US22 family. In terms of assembly, interacts with host NMI; this interaction inhibits NMI interaction with STAT1.

Its subcellular location is the virion tegument. The protein resides in the host cytoplasm. Its function is as follows. Plays a role in the inhibition of host innate immune response by disrupting the interaction between NMI and STAT1. In turn, NMI-mediated transcription of interferon-gamma stimulated genes is inhibited. This chain is Tegument protein UL23 (UL23), found in Homo sapiens (Human).